The primary structure comprises 152 residues: Superoxide dismutase [Cu-Zn] (152 aa).

His45, His47, and His62 together coordinate Cu cation. Cys56 and Cys145 form a disulfide bridge. 4 residues coordinate Zn(2+): His62, His70, His79, and Asp82. His119 provides a ligand contact to Cu cation.

It belongs to the Cu-Zn superoxide dismutase family. As to quaternary structure, homodimer. Cu cation serves as cofactor. It depends on Zn(2+) as a cofactor.

It localises to the cytoplasm. The catalysed reaction is 2 superoxide + 2 H(+) = H2O2 + O2. In terms of biological role, destroys radicals which are normally produced within the cells and which are toxic to biological systems. The sequence is that of Superoxide dismutase [Cu-Zn] (SODCC) from Brassica oleracea var. capitata (Cabbage).